The primary structure comprises 869 residues: TATA box-binding protein-associated factor RNA polymerase I subunit C (869 aa).

2 disordered regions span residues 605 to 629 and 729 to 869; these read SSLR…ASWT and GAAW…RMGF. Residue Thr-834 is modified to Phosphothreonine. Residues 835–860 show a composition bias toward polar residues; it reads PPHSQASSVRATRSQQHTPVLSSSQP. At Ser-848 the chain carries Phosphoserine.

Component of the transcription factor SL1/TIF-IB complex, composed of TBP and at least TAF1A, TAF1B, TAF1C and TAF1D. In the complex interacts directly with TBP, TAF1A and TAF1B. Interaction of the SL1/TIF-IB subunits with TBP excludes interaction of TBP with the transcription factor IID (TFIID) subunits. Interacts with MYC and RRN3. Interacts with p53/TP53; the interaction prevents the association of SL1/TIF-IB with UBTF and represses RNA polymerase I transcription. Part of Pol I pre-initiation complex (PIC), in which Pol I core assembles with RRN3 and promoter-bound UTBF and SL1/TIF-IB complex.

It is found in the nucleus. The protein localises to the nucleolus. Its function is as follows. Component of the transcription factor SL1/TIF-IB complex, which is involved in the assembly of the PIC (pre-initiation complex) during RNA polymerase I-dependent transcription. The rate of PIC formation probably is primarily dependent on the rate of association of SL1/TIF-IB with the rDNA promoter. SL1/TIF-IB is involved in stabilization of nucleolar transcription factor 1/UBTF on rDNA. Formation of SL1/TIF-IB excludes the association of TBP with TFIID subunits. Recruits RNA polymerase I to the rRNA gene promoter via interaction with RRN3. In Homo sapiens (Human), this protein is TATA box-binding protein-associated factor RNA polymerase I subunit C (TAF1C).